Consider the following 287-residue polypeptide: ATP synthase gamma chain (287 aa).

It belongs to the ATPase gamma chain family. F-type ATPases have 2 components, CF(1) - the catalytic core - and CF(0) - the membrane proton channel. CF(1) has five subunits: alpha(3), beta(3), gamma(1), delta(1), epsilon(1). CF(0) has three main subunits: a, b and c.

The protein resides in the cell membrane. Its function is as follows. Produces ATP from ADP in the presence of a proton gradient across the membrane. The gamma chain is believed to be important in regulating ATPase activity and the flow of protons through the CF(0) complex. This chain is ATP synthase gamma chain, found in Brevibacillus brevis (strain 47 / JCM 6285 / NBRC 100599).